The sequence spans 284 residues: MEMO1 family protein MMP1387 (284 aa).

This sequence belongs to the MEMO1 family.

This is MEMO1 family protein MMP1387 from Methanococcus maripaludis (strain DSM 14266 / JCM 13030 / NBRC 101832 / S2 / LL).